Consider the following 317-residue polypeptide: MWFYLVTLVGLYYLLRWYRERQVVSHLHDKYVFITGCDSGFGNLLARQLDRRGMRVLAACLTEKGAEELKSKTSDRLETVILDVTNTDSISAATQWVKEHVGDKGLWGLVNNAGVFQAFAYIEWCRPEDCMSIFQVNLIGLAQVTLSMLFLVKKARGRIVNVSSVLGRVALFGGFYSCSKYGVEAFSDVLRREIRDFGVKVSIIEPGSFKTRMTDAELIIEKTKKTWEATPEHIRESYGQQFFDDFCNTTRRELKKCSTNLSLVTDCMEHALTSKYPRTRYSAGWDARLFFIPLSYLPTSLVDCLLAISRRKPAQAV.

The first 17 residues, 1–17 (MWFYLVTLVGLYYLLRW), serve as a signal peptide directing secretion. 33–57 (FITGCDSGFGNLLARQLDRRGMRVL) serves as a coordination point for NAD(+). The N-linked (GlcNAc...) asparagine glycan is linked to Asn-161. Ser-164 is a substrate binding site. The Proton acceptor role is filled by Tyr-176.

The protein belongs to the short-chain dehydrogenases/reductases (SDR) family. In terms of tissue distribution, detected in prostate, liver and kidney.

Its subcellular location is the microsome membrane. It is found in the endoplasmic reticulum membrane. The catalysed reaction is all-trans-retinol--[retinol-binding protein] + NAD(+) = all-trans-retinal--[retinol-binding protein] + NADH + H(+). It carries out the reaction all-trans-retinol + NAD(+) = all-trans-retinal + NADH + H(+). The enzyme catalyses androsterone + NAD(+) = 5alpha-androstan-3,17-dione + NADH + H(+). It catalyses the reaction testosterone + NAD(+) = androst-4-ene-3,17-dione + NADH + H(+). The catalysed reaction is 5alpha-androstane-3alpha,17beta-diol + NAD(+) = 17beta-hydroxy-5alpha-androstan-3-one + NADH + H(+). It carries out the reaction 17beta-estradiol + NAD(+) = estrone + NADH + H(+). The enzyme catalyses 17beta-estradiol + NADP(+) = estrone + NADPH + H(+). It catalyses the reaction 3alpha-hydroxy-5alpha-pregnan-20-one + NAD(+) = 5alpha-pregnane-3,20-dione + NADH + H(+). The catalysed reaction is 5alpha-androstane-3beta,17beta-diol + NAD(+) = 17beta-hydroxy-5alpha-androstan-3-one + NADH + H(+). It carries out the reaction 3beta-hydroxy-5alpha-androstan-17-one + NAD(+) = 5alpha-androstan-3,17-dione + NADH + H(+). Its activity is regulated as follows. Competitively inhibited by 9-cis-retinoic acid and 13-cis-retinoic acid. Functionally, NAD-dependent oxidoreductase with broad substrate specificity that shows both oxidative and reductive activity (in vitro). Has retinol dehydrogenase activity towards all-trans-retinol (in vitro). Has 17-beta-hydroxysteroid dehydrogenase activity towards various steroids (in vitro). Converts 5-alpha-androstan-3-alpha,17-beta-diol to androsterone and estradiol to estrone (in vitro). Has 3-alpha-hydroxysteroid dehydrogenase activity towards androsterone (in vitro). The chain is 17-beta-hydroxysteroid dehydrogenase type 6 (Hsd17b6) from Rattus norvegicus (Rat).